A 141-amino-acid chain; its full sequence is Large ribosomal subunit protein uL11 (141 aa).

It belongs to the universal ribosomal protein uL11 family. As to quaternary structure, part of the ribosomal stalk of the 50S ribosomal subunit. Interacts with L10 and the large rRNA to form the base of the stalk. L10 forms an elongated spine to which L12 dimers bind in a sequential fashion forming a multimeric L10(L12)X complex. In terms of processing, one or more lysine residues are methylated.

Forms part of the ribosomal stalk which helps the ribosome interact with GTP-bound translation factors. The chain is Large ribosomal subunit protein uL11 from Campylobacter jejuni subsp. jejuni serotype O:6 (strain 81116 / NCTC 11828).